The chain runs to 192 residues: Visinin (192 aa).

G2 carries the N-myristoyl glycine lipid modification. 4 EF-hand domains span residues 24–59 (TEEE…FFPN), 61–96 (EPQG…TSSG), 97–132 (KTHL…IFKM), and 146–181 (NSPQ…KNDA). D74, N76, D78, T80, E85, D110, D112, N114, E116, E121, N164, K166, and E171 together coordinate Ca(2+).

This sequence belongs to the recoverin family. In terms of tissue distribution, retinal cell specific protein.

Functionally, seems to be implicated in the pathway from retinal rod guanylate cyclase to rhodopsin. May be involved in the blocking of the phosphorylation of rhodopsin. The protein is Visinin of Gallus gallus (Chicken).